We begin with the raw amino-acid sequence, 188 residues long: Peptidyl-tRNA hydrolase (188 aa).

Tyr-14 provides a ligand contact to tRNA. His-19 functions as the Proton acceptor in the catalytic mechanism. Tyr-64, Asn-66, and Asn-112 together coordinate tRNA.

It belongs to the PTH family. As to quaternary structure, monomer.

The protein localises to the cytoplasm. The enzyme catalyses an N-acyl-L-alpha-aminoacyl-tRNA + H2O = an N-acyl-L-amino acid + a tRNA + H(+). In terms of biological role, hydrolyzes ribosome-free peptidyl-tRNAs (with 1 or more amino acids incorporated), which drop off the ribosome during protein synthesis, or as a result of ribosome stalling. Its function is as follows. Catalyzes the release of premature peptidyl moieties from peptidyl-tRNA molecules trapped in stalled 50S ribosomal subunits, and thus maintains levels of free tRNAs and 50S ribosomes. This is Peptidyl-tRNA hydrolase from Bacillus pumilus (strain SAFR-032).